We begin with the raw amino-acid sequence, 300 residues long: Kynurenine formamidase (300 aa).

The HGGXW motif lies at H86 to W90. S157 (nucleophile) is an active-site residue. Catalysis depends on residues D244 and H276.

Belongs to the kynurenine formamidase family. As to quaternary structure, homodimer.

The enzyme catalyses N-formyl-L-kynurenine + H2O = L-kynurenine + formate + H(+). The protein operates within amino-acid degradation; L-tryptophan degradation via kynurenine pathway; L-kynurenine from L-tryptophan: step 2/2. In terms of biological role, catalyzes the hydrolysis of N-formyl-L-kynurenine to L-kynurenine, the second step in the kynurenine pathway of tryptophan degradation. Required for elimination of toxic metabolites. This chain is Kynurenine formamidase (KFase), found in Drosophila melanogaster (Fruit fly).